The chain runs to 210 residues: Mating-type-like protein ALPHA2, silenced copy at MTL3 (210 aa).

Residues 108–170 (ASYRGHRFTR…NRRRKQKSIY (63 aa)) constitute a DNA-binding region (homeobox; TALE-type).

Belongs to the TALE/M-ATYP homeobox family.

It is found in the nucleus. Mating type proteins are sequence specific DNA-binding proteins that act as master switches in yeast differentiation by controlling gene expression in a cell type-specific fashion. The sequence is that of Mating-type-like protein ALPHA2, silenced copy at MTL3 (MTL3alpha2) from Candida glabrata (strain ATCC 2001 / BCRC 20586 / JCM 3761 / NBRC 0622 / NRRL Y-65 / CBS 138) (Yeast).